We begin with the raw amino-acid sequence, 547 residues long: Apicoplast pyruvate carrier 1 (547 aa).

The disordered stretch occupies residues 1–33; sequence MEPRAPPRLSVSSPRRESGATVPSHSPSTLLSC. Residues 1 to 45 are Cytoplasmic-facing; it reads MEPRAPPRLSVSSPRRESGATVPSHSPSTLLSCASSETATEKRRR. Residues 21–33 show a composition bias toward polar residues; sequence TVPSHSPSTLLSC. 12 consecutive transmembrane segments (helical) span residues 46-66, 126-146, 167-187, 189-209, 212-232, 278-298, 345-365, 385-405, 417-437, 445-465, 467-487, and 515-535; these read WTGV…GTVY, AWVL…GGIA, VGMA…FGVI, GVGL…WFPE, GIVS…FSPL, LLAV…RVPA, ALVS…GLAI, ILTE…NAVG, GFQT…FFLP, LCYA…FSVF, SAVA…FIFG, and LMGL…ALSP.

The protein belongs to the major facilitator superfamily. As to quaternary structure, interacts with apicoplast pyruvate carrier 2.

Its subcellular location is the plastid. The protein localises to the apicoplast. It localises to the membrane. Its function is as follows. Along with apicoplast pyruvate carrier 2, forms apicoplast pyruvate carrier (APC) complex, which transports pyruvate into the apicoplast and may also transport amino acids like methionine, serine, glycine and tryptophan with low efficiency. Required for maintaining pyruvate-dependent metabolic activities in the apicoplast, such as synthesis of fatty acids, isopentenyl pyrophosphate (IPP), dimethylallyl pyrophosphate (DMAPP) and methylerythritol 4-phosphate (MEP). Required for maintaining the integrity of the apicoplast. Required for normal parasite growth. The chain is Apicoplast pyruvate carrier 1 from Toxoplasma gondii.